A 119-amino-acid polypeptide reads, in one-letter code: Large ribosomal subunit protein uL18 (119 aa).

It belongs to the universal ribosomal protein uL18 family. Part of the 50S ribosomal subunit; part of the 5S rRNA/L5/L18/L25 subcomplex. Contacts the 5S and 23S rRNAs.

Its function is as follows. This is one of the proteins that bind and probably mediate the attachment of the 5S RNA into the large ribosomal subunit, where it forms part of the central protuberance. The protein is Large ribosomal subunit protein uL18 of Nitratidesulfovibrio vulgaris (strain DSM 19637 / Miyazaki F) (Desulfovibrio vulgaris).